Consider the following 180-residue polypeptide: tRNA (cytidine(56)-2'-O)-methyltransferase (180 aa).

S-adenosyl-L-methionine is bound by residues Leu83, 115–119 (GAEKV), and 133–140 (VGNQPHSE).

The protein belongs to the aTrm56 family. In terms of assembly, homodimer.

Its subcellular location is the cytoplasm. The catalysed reaction is cytidine(56) in tRNA + S-adenosyl-L-methionine = 2'-O-methylcytidine(56) in tRNA + S-adenosyl-L-homocysteine + H(+). Specifically catalyzes the AdoMet-dependent 2'-O-ribose methylation of cytidine at position 56 in tRNAs. This Methanococcus aeolicus (strain ATCC BAA-1280 / DSM 17508 / OCM 812 / Nankai-3) protein is tRNA (cytidine(56)-2'-O)-methyltransferase.